A 307-amino-acid polypeptide reads, in one-letter code: Histone deacetylase HDT1 (307 aa).

Residues 98–112 (EDEMDLDSEDEDEEL) show a composition bias toward acidic residues. Positions 98-280 (EDEMDLDSED…KSGGSVPCKP (183 aa)) are disordered. Basic and acidic residues predominate over residues 119–132 (ENGKADEKKQKSQE). Positions 151–197 (DDDSDEDETDDSDEDETDDSDEGLSSEEGDDDSSDEDDTSDDEEEDT) are enriched in acidic residues. A compositionally biased stretch (basic and acidic residues) spans 198-211 (PTPKKPEVGKKRPA). A compositionally biased stretch (low complexity) spans 265–277 (SPKSAPKSGGSVP). A C2H2-type; degenerate zinc finger spans residues 276 to 299 (VPCKPCSKSFISETALQAHSRAKM).

Belongs to the histone deacetylase HD2 family. As to quaternary structure, multimer. Isolated as a trimer composed of 3 proteins of 39, 42 and 45 kDa, possibly a homotrimer with different phosphorylation status or a heterotrimer with HDT2 and/or HDT3. In terms of processing, the N-terminus is blocked. Post-translationally, phosphorylated. Required for enzyme activity.

Its subcellular location is the nucleus. The protein localises to the nucleolus. Its activity is regulated as follows. Inhibited by 3-(4-Aroyl-1-methyl-1H-pyrrol-2-yl)-N-hydroxy-2-propenamides. 3-(1-methyl-4-phenylacetyl-1H-pyrrol-2-yl)-N-hydroxy-2-propenamide 1b and 3-[1-methyl-4-(3-phenyl-2-propenoyl)-1H-pyrrol-2-yl]-N-hydroxy-2-propenamide 1c are very potent inhibitors. Its function is as follows. Mediates the deacetylation of lysine residues on the N-terminal part of the core histones (H2A, H2B, H3 and H4). Histone deacetylation gives a tag for epigenetic repression and plays an important role in transcriptional regulation, cell cycle progression and developmental events. Able to deacetylate all 4 core histones. This Zea mays (Maize) protein is Histone deacetylase HDT1 (HDT1).